The chain runs to 210 residues: Proteasome subunit beta (210 aa).

The propeptide at 1–9 (MDNDKYLKG) is removed in mature form; by autocatalysis. Catalysis depends on Thr-10, which acts as the Nucleophile.

Belongs to the peptidase T1B family. In terms of assembly, the 20S proteasome core is composed of 14 alpha and 14 beta subunits that assemble into four stacked heptameric rings, resulting in a barrel-shaped structure. The two inner rings, each composed of seven catalytic beta subunits, are sandwiched by two outer rings, each composed of seven alpha subunits. The catalytic chamber with the active sites is on the inside of the barrel. Has a gated structure, the ends of the cylinder being occluded by the N-termini of the alpha-subunits. Is capped at one or both ends by the proteasome regulatory ATPase, PAN.

The protein localises to the cytoplasm. It carries out the reaction Cleavage of peptide bonds with very broad specificity.. Its activity is regulated as follows. The formation of the proteasomal ATPase PAN-20S proteasome complex, via the docking of the C-termini of PAN into the intersubunit pockets in the alpha-rings, triggers opening of the gate for substrate entry. Interconversion between the open-gate and close-gate conformations leads to a dynamic regulation of the 20S proteasome proteolysis activity. Component of the proteasome core, a large protease complex with broad specificity involved in protein degradation. The chain is Proteasome subunit beta from Methanosarcina mazei (strain ATCC BAA-159 / DSM 3647 / Goe1 / Go1 / JCM 11833 / OCM 88) (Methanosarcina frisia).